The primary structure comprises 108 residues: MNLKSIIFVLFIAFFAFSLANDDDPTCPNGFICFWVGQNYTGDQWKWTPRMNYRDLPRQYHNNVGSYVAKTNACFKNWIPYLTFECNEGDSSHSFTFGKIIDGVSHEC.

A signal peptide spans 1–20 (MNLKSIIFVLFIAFFAFSLA). Residue asparagine 39 is glycosylated (N-linked (GlcNAc...) asparagine).

The protein belongs to the Dictyostelium gerABC family.

It localises to the secreted. This is an uncharacterized protein from Dictyostelium discoideum (Social amoeba).